Reading from the N-terminus, the 680-residue chain is DNA-directed RNA polymerase subunit beta' (680 aa).

Residues Cys-69, Cys-71, Cys-87, and Cys-90 each contribute to the Zn(2+) site. Residues Asp-489, Asp-491, and Asp-493 each coordinate Mg(2+).

Belongs to the RNA polymerase beta' chain family. RpoC1 subfamily. In plastids the minimal PEP RNA polymerase catalytic core is composed of four subunits: alpha, beta, beta', and beta''. When a (nuclear-encoded) sigma factor is associated with the core the holoenzyme is formed, which can initiate transcription. Requires Mg(2+) as cofactor. Zn(2+) serves as cofactor.

It localises to the plastid. Its subcellular location is the chloroplast. The enzyme catalyses RNA(n) + a ribonucleoside 5'-triphosphate = RNA(n+1) + diphosphate. DNA-dependent RNA polymerase catalyzes the transcription of DNA into RNA using the four ribonucleoside triphosphates as substrates. This is DNA-directed RNA polymerase subunit beta' from Amborella trichopoda.